The primary structure comprises 564 residues: Juvenile hormone esterase (564 aa).

An N-terminal signal peptide occupies residues methionine 1–alanine 19. The N-linked (GlcNAc...) asparagine glycan is linked to asparagine 81. A disulfide bridge links cysteine 89 with cysteine 109. Asparagine 180 is a glycosylation site (N-linked (GlcNAc...) asparagine). Serine 220 acts as the Acyl-ester intermediate in catalysis. The Charge relay system role is filled by glutamate 351. Asparagine 402 carries N-linked (GlcNAc...) asparagine glycosylation. Residue histidine 465 is the Charge relay system of the active site. Asparagine 515 carries an N-linked (GlcNAc...) asparagine glycan.

The protein belongs to the type-B carboxylesterase/lipase family.

It catalyses the reaction juvenile hormone I + H2O = juvenile hormone I carboxylate + methanol + H(+). The enzyme catalyses juvenile hormone III + H2O = juvenile hormone III carboxylate + methanol + H(+). JH esterase plays a crucial role in the decrease of JH activity in lepidopteran insects, by hydrolyzing the methyl ester of JH. It is also involved in the transport of JH. This Heliothis virescens (Tobacco budworm moth) protein is Juvenile hormone esterase.